A 462-amino-acid chain; its full sequence is Argininosuccinate lyase (462 aa).

It belongs to the lyase 1 family. Argininosuccinate lyase subfamily.

The protein resides in the cytoplasm. It carries out the reaction 2-(N(omega)-L-arginino)succinate = fumarate + L-arginine. It functions in the pathway amino-acid biosynthesis; L-arginine biosynthesis; L-arginine from L-ornithine and carbamoyl phosphate: step 3/3. The chain is Argininosuccinate lyase from Dechloromonas aromatica (strain RCB).